The sequence spans 107 residues: U1-lycotoxin-Ls1q (107 aa).

An N-terminal signal peptide occupies residues 1 to 20 (MMKVLVVVALLVTLISYSSS). The propeptide occupies 21–41 (EGIDDLEADELLSLMANEQTR). Disulfide bonds link cysteine 44–cysteine 59, cysteine 51–cysteine 68, cysteine 58–cysteine 86, and cysteine 70–cysteine 84.

Belongs to the neurotoxin 19 (CSTX) family. 04 (U1-Lctx) subfamily. In terms of tissue distribution, expressed by the venom gland.

It is found in the secreted. The chain is U1-lycotoxin-Ls1q from Lycosa singoriensis (Wolf spider).